The following is a 201-amino-acid chain: ATP-dependent Clp protease proteolytic subunit (201 aa).

Catalysis depends on S105, which acts as the Nucleophile. H130 is an active-site residue.

The protein belongs to the peptidase S14 family. In terms of assembly, fourteen ClpP subunits assemble into 2 heptameric rings which stack back to back to give a disk-like structure with a central cavity, resembling the structure of eukaryotic proteasomes.

It is found in the cytoplasm. It carries out the reaction Hydrolysis of proteins to small peptides in the presence of ATP and magnesium. alpha-casein is the usual test substrate. In the absence of ATP, only oligopeptides shorter than five residues are hydrolyzed (such as succinyl-Leu-Tyr-|-NHMec, and Leu-Tyr-Leu-|-Tyr-Trp, in which cleavage of the -Tyr-|-Leu- and -Tyr-|-Trp bonds also occurs).. Cleaves peptides in various proteins in a process that requires ATP hydrolysis. Has a chymotrypsin-like activity. Plays a major role in the degradation of misfolded proteins. In Aquifex aeolicus (strain VF5), this protein is ATP-dependent Clp protease proteolytic subunit.